Consider the following 293-residue polypeptide: Non-structural protein NS-S (293 aa).

The interval 21 to 29 (VRLEPSLGE) is essential for inhibition of IFN-beta activation and interaction with host TBK1. Residues 66–69 (PKNP) form an involved in inclusion bodies formation region. Residues 148-220 (FEGDMILDSL…KPLLDCWDFF (73 aa)) form an interaction with host TNIP2 region.

The protein belongs to the Bandavirus NS-S protein family. As to quaternary structure, interacts with the host E3 ubiquitin ligase TRIM25; this interaction sequesters TRIM25 in NSs-induced cytoplasmic inclusion bodies. Interacts with the host E3 ubiquitin ligase RIGI; this interaction sequesters RIGI in NSs-induced cytoplasmic inclusion bodies. Interacts with the host E3 ubiquitin ligase TBK1 (via N-terminus); this interaction sequesters TBK1 in NSs-induced cytoplasmic inclusion bodies and inhibits TBK1 phosphorylation. NSs does not interact with IKBKE/IKKE or IRF3. Interacts with host IRF7; this interaction sequesters IRF7 in NSs-induced cytoplasmic inclusion bodies. Interacts with host SYNGR2; this interaction is essential to promoting the formation of the inclusion bodies to become virus factories for viral RNA replication through its interaction with NSs. Interacts with host STAT2; this interaction sequesters STAT2 in NSs-induced cytoplasmic inclusion bodies. Interacts with host TNIP2; this interaction promotes TPL2 complex formation and signaling activity leading to IL-10 production. Interacts with host TRIM21 (via B30.2/SPRY domain); this interaction activates host NFE2L2-mediated transcriptional activation of antioxidant genes. Interacts with host CDK1; this interaction is inclusion body dependent, it inhibits the formation and nuclear import of the cyclin B1-CDK1 complex and leads to host cell cycle arrest.

Its subcellular location is the host cytoplasm. It localises to the host cytoplasmic vesicle. Sequesters host STAT2 into viral inclusion bodies. Impairs IFN-stimulated phosphorylation and nuclear translocation of host STAT2, thereby suppressing type-I IFN antiviral signaling. Sequesters host TRIM25, RIGI, TBK1/IKK complex components (TBK1, IKBKE/IKKE, and IRF3) and IRF7 into viral inclusion bodies, thereby inhibiting the IFN responses. Inhibits TRIM25-mediated ubiquitination of the RIGI. The sequestration of IKBKE/IKKE, and IRF3 occurs via the interaction with TBK1. Sequestration and inhibition of host TBK1 probably participates to the cytokine storm induced by the virus. Also inhibits the phosphorylation of host TBK1. Interacts with host TNIP2 and promotes TPL2-TNIP2-p105 complex formation leading to IL-10 induction. By interacting with CDK1, induces host cell arrest at the G2/M transition to promote viral replication. Requested for the formation of the viral cytoplasmic inclusion bodies. The protein is Non-structural protein NS-S (NSS) of SFTS phlebovirus (isolate SFTSV/Human/China/HB29/2010) (Severe fever with thrombocytopenia virus).